The primary structure comprises 375 residues: Protein GOLM2 (375 aa).

Over 1–12 (MVGFGANRRGGR) the chain is Cytoplasmic. Residues 13–33 (LPSFLLAALLLVIAVLAFNCW) traverse the membrane as a helical; Signal-anchor for type II membrane protein segment. A coiled-coil region spans residues 34–198 (NAASRQAVLR…REQKATQRIQ (165 aa)). The Lumenal segment spans residues 34–375 (NAASRQAVLR…SKPRFGDGVL (342 aa)). 3 disordered regions span residues 81–102 (LEQK…DGQV), 193–327 (ATQR…DSQN), and 342–375 (RAVG…DGVL). Composition is skewed to basic and acidic residues over residues 193–204 (ATQRIQSSKDAE) and 350–375 (KQND…DGVL).

Belongs to the GOLM family.

It is found in the membrane. This chain is Protein GOLM2 (GOLM2), found in Gallus gallus (Chicken).